Reading from the N-terminus, the 207-residue chain is Protein GrpE (207 aa).

The span at 1–11 (MTETDGQKDNN) shows a compositional bias: basic and acidic residues. The disordered stretch occupies residues 1–40 (MTETDGQKDNNQDTAQAAADPVVSKPYIMPDDPEEGSNEA).

Belongs to the GrpE family. In terms of assembly, homodimer.

The protein localises to the cytoplasm. In terms of biological role, participates actively in the response to hyperosmotic and heat shock by preventing the aggregation of stress-denatured proteins, in association with DnaK and GrpE. It is the nucleotide exchange factor for DnaK and may function as a thermosensor. Unfolded proteins bind initially to DnaJ; upon interaction with the DnaJ-bound protein, DnaK hydrolyzes its bound ATP, resulting in the formation of a stable complex. GrpE releases ADP from DnaK; ATP binding to DnaK triggers the release of the substrate protein, thus completing the reaction cycle. Several rounds of ATP-dependent interactions between DnaJ, DnaK and GrpE are required for fully efficient folding. The polypeptide is Protein GrpE (Rhodopseudomonas palustris (strain ATCC BAA-98 / CGA009)).